The primary structure comprises 477 residues: Trigger factor (477 aa).

The 86-residue stretch at glutamate 163–valine 248 folds into the PPIase FKBP-type domain. The span at lysine 408–proline 461 shows a compositional bias: basic and acidic residues. The segment at lysine 408–lysine 477 is disordered.

The protein belongs to the FKBP-type PPIase family. Tig subfamily.

The protein localises to the cytoplasm. It catalyses the reaction [protein]-peptidylproline (omega=180) = [protein]-peptidylproline (omega=0). In terms of biological role, involved in protein export. Acts as a chaperone by maintaining the newly synthesized protein in an open conformation. Functions as a peptidyl-prolyl cis-trans isomerase. This chain is Trigger factor, found in Pelagibacter ubique (strain HTCC1062).